Here is a 344-residue protein sequence, read N- to C-terminus: TATA box-binding protein-like 2 (344 aa).

Positions 78 to 143 are disordered; the sequence is NKDRTVTGNK…SNQLSSETPN (66 aa). Low complexity predominate over residues 110–120; sequence GSGLNLNSNSS. Polar residues predominate over residues 134–143; the sequence is SNQLSSETPN.

Belongs to the TBP family. As to quaternary structure, interacts with TAF3.

The protein resides in the cytoplasm. It localises to the nucleus. Transcription factor required in complex with TAF3 for the differentiation of myoblasts into myocytes. The complex replaces TFIID at specific promoters at an early stage in the differentiation process. The polypeptide is TATA box-binding protein-like 2 (Rattus norvegicus (Rat)).